A 1006-amino-acid chain; its full sequence is MAVTISTNAFVNASLLDESRNSFWRPLFHQPYYNCRRVVRLNSRKLNSKVMFCLNLNTKEVGLQKPGDKGFEFKPSFDQYLQIMESVKTARKKKKFDRLKVEEDDGGGGNGDSVYEVKDMKIKSGELKDETFRKRYSRQEIVSDKRNERVFKRNGEIENHRVATDLKWSKSGESSVALKLSKSGESSVTVPEDESFRKRYSKQEYHRSSDTSRGIERGSRGDELDLVVEERRVQRIAKDARWSKSRESSVAVKWSNSGESSVTMPKDESFRRRYSKQEHHRSSDTSRGIARGSKGDELELVVEERRVQRIAKDVRWSKSDESLVPVSEDESFRRGNPKQEMVRYQRVSDTSRGIERGSKGDGLDLLAEERRIERLANERHEIRSSKLSGTRRIGAKRNDDDDDSLFAMETPAFRFSDESSDIVDKPATSRVEMEDRIEKLAKVLNGADINMPEWQFSKAIRSAKIRYTDYTVMRLIHFLGKLGNWRRVLQVIEWLQRQDRYKSNKIRIIYTTALNVLGKSRRPVEALNVFHAMLLQISSYPDMVAYRSIAVTLGQAGHIKELFYVIDTMRSPPKKKFKPTTLEKWDPRLEPDVVVYNAVLNACVQRKQWEGAFWVLQQLKQRGQKPSPVTYGLIMEVMLACEKYNLVHEFFRKMQKSSIPNALAYRVLVNTLWKEGKSDEAVHTVEDMESRGIVGSAALYYDLARCLCSAGRCNEGLNMVNFVNPVVLKLIENLIYKADLVHTIQFQLKKICRVANKPLVVTYTGLIQACVDSGNIKNAAYIFDQMKKVCSPNLVTCNIMLKAYLQGGLFEEARELFQKMSEDGNHIKNSSDFESRVLPDTYTFNTMLDTCAEQEKWDDFGYAYREMLRHGYHFNAKRHLRMVLEASRAGKEEVMEATWEHMRRSNRIPPSPLIKERFFRKLEKGDHISAISSLADLNGKIEETELRAFSTSAWSRVLSRFEQDSVLRLMDDVNRRLGSRSESSDSVLGNLLSSCKDYLKTRTHNL.

The N-terminal 40 residues, 1-40 (MAVTISTNAFVNASLLDESRNSFWRPLFHQPYYNCRRVVR), are a transit peptide targeting the chloroplast. Disordered stretches follow at residues 180 to 219 (LSKSGESSVTVPEDESFRKRYSKQEYHRSSDTSRGIERGS) and 248 to 292 (SSVA…IARG). Residues 194–219 (ESFRKRYSKQEYHRSSDTSRGIERGS) are compositionally biased toward basic and acidic residues. Residues 254–263 (WSNSGESSVT) show a composition bias toward polar residues. A compositionally biased stretch (basic and acidic residues) spans 265-284 (PKDESFRRRYSKQEHHRSSD). 10 PPR repeats span residues 468-502 (TDYTVMRLIHFLGKLGNWRRVLQVIEWLQRQDRYK), 506-536 (IRIIYTTALNVLGKSRRPVEALNVFHAMLLQ), 542-572 (DMVAYRSIAVTLGQAGHIKELFYVIDTMRSP), 592-626 (DVVVYNAVLNACVQRKQWEGAFWVLQQLKQRGQKP), 627-657 (SPVTYGLIMEVMLACEKYNLVHEFFRKMQKS), 661-695 (NALAYRVLVNTLWKEGKSDEAVHTVEDMESRGIVG), 759-789 (LVVTYTGLIQACVDSGNIKNAAYIFDQMKKV), 793-827 (NLVTCNIMLKAYLQGGLFEEARELFQKMSEDGNHI), 840-874 (DTYTFNTMLDTCAEQEKWDDFGYAYREMLRHGYHF), and 875-909 (NAKRHLRMVLEASRAGKEEVMEATWEHMRRSNRIP).

It belongs to the PPR family. P subfamily.

The protein localises to the plastid. It localises to the chloroplast. May play a role in embryogenesis. The sequence is that of Pentatricopeptide repeat-containing protein At1g30610, chloroplastic (EMB2279) from Arabidopsis thaliana (Mouse-ear cress).